Here is a 430-residue protein sequence, read N- to C-terminus: Dihydrolipoyllysine-residue acetyltransferase component of pyruvate dehydrogenase complex (430 aa).

Residues 2–77 (AFEFRLPDIG…VVGDVIVKID (76 aa)) form the Lipoyl-binding domain. Lys43 is modified (N6-lipoyllysine). The tract at residues 80–122 (DAEDMQFKGHDDDSSSKEEPAKEEAPAEQAPVATQTEEVDENR) is disordered. Basic and acidic residues predominate over residues 84 to 104 (MQFKGHDDDSSSKEEPAKEEA). Positions 125–162 (KAMPSVRKYAREKGVNIKAVSGSGKNGRITKEDVDAYL) constitute a Peripheral subunit-binding (PSBD) domain. The disordered stretch occupies residues 165 to 200 (GAPTASNESAASATSEEVAETPAAPAAVTLEGDFPE). Residues 166 to 193 (APTASNESAASATSEEVAETPAAPAAVT) are compositionally biased toward low complexity. His401 is an active-site residue.

The protein belongs to the 2-oxoacid dehydrogenase family. In terms of assembly, forms a 24-polypeptide structural core with octahedral symmetry. The cofactor is (R)-lipoate.

It carries out the reaction N(6)-[(R)-dihydrolipoyl]-L-lysyl-[protein] + acetyl-CoA = N(6)-[(R)-S(8)-acetyldihydrolipoyl]-L-lysyl-[protein] + CoA. In terms of biological role, the pyruvate dehydrogenase complex catalyzes the overall conversion of pyruvate to acetyl-CoA and CO(2). It contains multiple copies of three enzymatic components: pyruvate dehydrogenase (E1), dihydrolipoamide acetyltransferase (E2) and lipoamide dehydrogenase (E3). The chain is Dihydrolipoyllysine-residue acetyltransferase component of pyruvate dehydrogenase complex (pdhC) from Staphylococcus aureus (strain COL).